Reading from the N-terminus, the 571-residue chain is Zinc finger protein 181 (571 aa).

The KRAB domain occupies 4 to 76 (VTFNDVAIDF…EKKLSKGMIP (73 aa)). Glycyl lysine isopeptide (Lys-Gly) (interchain with G-Cter in SUMO2) cross-links involve residues Lys-109 and Lys-126. 11 C2H2-type zinc fingers span residues 237–259 (YTCSECGKAFGKQSILNRHWRIH), 265–287 (YECRECGKTFSHGSSLTRHLISH), 293–315 (YKCIECGKAFSHVSSLTNHQSTH), 321–343 (YECMNCGKSFSRVSHLIEHLRIH), 349–371 (YECRICGKAFIHRSSLIHHQKIH), 377–399 (YECRECGKAFCCSSHLTRHQRIH), 405–427 (YECNKCLKVFSSLSFLVQHQSIH), 433–455 (FECQKCRKSFNQLESLNMHLRNH), 461–483 (YECSICGKAFSHRSSLLQHHRIH), 489–511 (YECIKCGKTFSCSSNLTVHQRIH), and 517–539 (YKCNECGKAFSKGSNLTAHQRVH).

This sequence belongs to the krueppel C2H2-type zinc-finger protein family.

Its subcellular location is the nucleus. May be involved in transcriptional regulation. The chain is Zinc finger protein 181 (ZNF181) from Homo sapiens (Human).